A 188-amino-acid chain; its full sequence is Elongation factor P (188 aa).

This sequence belongs to the elongation factor P family.

The protein resides in the cytoplasm. The protein operates within protein biosynthesis; polypeptide chain elongation. Involved in peptide bond synthesis. Stimulates efficient translation and peptide-bond synthesis on native or reconstituted 70S ribosomes in vitro. Probably functions indirectly by altering the affinity of the ribosome for aminoacyl-tRNA, thus increasing their reactivity as acceptors for peptidyl transferase. This chain is Elongation factor P, found in Anaplasma marginale (strain St. Maries).